Consider the following 451-residue polypeptide: Probable M18 family aminopeptidase 1 (451 aa).

Positions 93, 168, and 426 each coordinate Zn(2+).

The protein belongs to the peptidase M18 family. The cofactor is Zn(2+).

This chain is Probable M18 family aminopeptidase 1 (apeA), found in Thermotoga maritima (strain ATCC 43589 / DSM 3109 / JCM 10099 / NBRC 100826 / MSB8).